We begin with the raw amino-acid sequence, 252 residues long: ATP synthase subunit a (252 aa).

The next 5 membrane-spanning stretches (helical) occupy residues 33–53 (GQVFITTWIVMGILIVAALAA), 92–112 (VPFVGTLFLFIFVCNWSGALV), 130–150 (DINTTVALALLVSLAYFYAGL), 196–216 (LVVGVLVLLVPLFVPLPVMAL), and 217–237 (GLFTSAIQALVFATLAATYIG).

The protein belongs to the ATPase A chain family. F-type ATPases have 2 components, CF(1) - the catalytic core - and CF(0) - the membrane proton channel. CF(1) has five subunits: alpha(3), beta(3), gamma(1), delta(1), epsilon(1). CF(0) has three main subunits: a(1), b(2) and c(9-12). The alpha and beta chains form an alternating ring which encloses part of the gamma chain. CF(1) is attached to CF(0) by a central stalk formed by the gamma and epsilon chains, while a peripheral stalk is formed by the delta and b chains.

Its subcellular location is the cellular thylakoid membrane. In terms of biological role, key component of the proton channel; it plays a direct role in the translocation of protons across the membrane. The sequence is that of ATP synthase subunit a from Synechococcus sp. (strain PCC 6716).